Here is an 899-residue protein sequence, read N- to C-terminus: Protein translocase subunit SecA (899 aa).

Residues Gln-87, 105 to 109 (GEGKT), and Asp-512 each bind ATP. Disordered regions lie at residues 573–592 (RRIDNQLRGRSGRQGDPGSS) and 861–899 (ITVNDDEHPAEPAKSQKNAGRNEPCPCGSGKKYKKCCGK). The Zn(2+) site is built by Cys-885, Cys-887, Cys-896, and Cys-897.

The protein belongs to the SecA family. In terms of assembly, monomer and homodimer. Part of the essential Sec protein translocation apparatus which comprises SecA, SecYEG and auxiliary proteins SecDF-YajC and YidC. Requires Zn(2+) as cofactor.

It is found in the cell inner membrane. The protein localises to the cytoplasm. The enzyme catalyses ATP + H2O + cellular proteinSide 1 = ADP + phosphate + cellular proteinSide 2.. Functionally, part of the Sec protein translocase complex. Interacts with the SecYEG preprotein conducting channel. Has a central role in coupling the hydrolysis of ATP to the transfer of proteins into and across the cell membrane, serving as an ATP-driven molecular motor driving the stepwise translocation of polypeptide chains across the membrane. The polypeptide is Protein translocase subunit SecA (Trichlorobacter lovleyi (strain ATCC BAA-1151 / DSM 17278 / SZ) (Geobacter lovleyi)).